The primary structure comprises 123 residues: Antitoxin RnlB (123 aa).

Can form a complex with cognate toxin RnlA. In terms of processing, probably degraded by CplXP and Lon proteases.

Functionally, antitoxin component of a type II toxin-antitoxin (TA) system. A labile antitoxin (half-life of 2.1 minutes) that inhibits the endonuclease activity of cognate toxin RnlA but not that of non-cognate toxin LsoA. The polypeptide is Antitoxin RnlB (rnlB) (Escherichia coli (strain K12)).